Here is a 341-residue protein sequence, read N- to C-terminus: UPF0324 membrane protein SMU_2059c (341 aa).

Transmembrane regions (helical) follow at residues 7–24 (KLSG…AWFL), 28–47 (FPLV…LAIF), 68–85 (FAVV…VLTV), 90–107 (LPII…AFLL), 120–142 (LVGV…VIQA), 147–169 (IAQS…PTLG), 178–200 (GFAL…AAAW), 211–233 (GATI…LSFY), 254–276 (VFPM…TALG), 291–310 (FCIV…VKLV), and 317–339 (IVLG…HLLG).

The protein belongs to the UPF0324 family.

The protein localises to the cell membrane. The polypeptide is UPF0324 membrane protein SMU_2059c (Streptococcus mutans serotype c (strain ATCC 700610 / UA159)).